The following is a 349-amino-acid chain: Putative nuclease HARBI1 (349 aa).

In terms of domain architecture, DDE Tnp4 spans valine 148 to asparagine 300. A divalent metal cation contacts are provided by aspartate 149, aspartate 199, aspartate 225, and glutamate 261.

The protein belongs to the HARBI1 family. In terms of assembly, interacts with NAIF1. A divalent metal cation serves as cofactor. As to expression, detected in brain.

It localises to the nucleus. Its subcellular location is the cytoplasm. Transposase-derived protein that may have nuclease activity (Potential). Does not have transposase activity. This Bos taurus (Bovine) protein is Putative nuclease HARBI1 (HARBI1).